Here is a 3416-residue protein sequence, read N- to C-terminus: Genome polyprotein (3416 aa).

Residues 1-34 (MAKGAVLKGKGGGPPRRVPKETAKKTRQGPGRLP) are disordered. Over 1 to 99 (MAKGAVLKGK…NKRRGKRRST (99 aa)) the chain is Cytoplasmic. Residues 97 to 117 (RSTTGLLTPILLACLATLVFS) constitute a propeptide, ER anchor for the capsid protein C, removed in mature form by serine protease NS3. The helical transmembrane segment at 100–120 (TGLLTPILLACLATLVFSATV) threads the bilayer. Topologically, residues 121–243 (RRERTGNMVI…HLTRVEGWVW (123 aa)) are extracellular. The N-linked (GlcNAc...) asparagine; by host glycan is linked to Asn145. Residues 244 to 261 (KNKFLTAAFCAVVWMVTD) traverse the membrane as a helical segment. A topological domain (cytoplasmic) is located at residue Ser262. The chain crosses the membrane as a helical span at residues 263–281 (LPTRFIVITVALCLAPTYA). Over 282 to 728 (TRCTHLQNRD…HTAFGAAFNT (447 aa)) the chain is Extracellular. 6 disulfide bridges follow: Cys284/Cys311, Cys341/Cys397, Cys341/Cys402, Cys355/Cys386, Cys373/Cys397, and Cys373/Cys402. Positions 379-392 (DRGWGNHCGLFGKG) are fusion peptide. A glycan (N-linked (GlcNAc...) asparagine; by host) is linked at Asn435. 2 cysteine pairs are disulfide-bonded: Cys467–Cys571 and Cys588–Cys619. Residues 729-749 (IFGGVGFLPRILLGVALAWLG) traverse the membrane as a helical segment. Topologically, residues 750-756 (LNSRNPT) are cytoplasmic. Residues 757–777 (LSVGFLITGGLVLTMTLGVGA) form a helical membrane-spanning segment. Residues 778–1134 (DMGCAIDANR…RSMVLADNGA (357 aa)) are Extracellular-facing. Intrachain disulfides connect Cys781/Cys792, Cys832/Cys922, Cys957/Cys1002, Cys1059/Cys1108, Cys1070/Cys1092, and Cys1091/Cys1095. 3 N-linked (GlcNAc...) asparagine; by host glycosylation sites follow: Asn862, Asn985, and Asn1001. A helical transmembrane segment spans residues 1135-1155 (MLSEGGVPGIVAVFVVLELVI). Over 1156–1164 (RRRPTTGSS) the chain is Lumenal. A helical transmembrane segment spans residues 1165-1185 (VVWCGMVVLGLVVTGLVTIEG). Residues 1186–1189 (LCRY) lie on the Cytoplasmic side of the membrane. Residues 1190–1210 (VVAVGILMSMELGPEIVALVL) traverse the membrane as a helical segment. At 1211 to 1235 (LQAVFDMRTGLLVAFAVKRAYTTRE) the chain is on the lumenal side. Residues 1236 to 1256 (AVATYFLLLVLELGFPEASLS) traverse the membrane as a helical segment. Residues 1257 to 1295 (NIWKWADSLAMGALILQACGQEGRTRVGYLLAAMMTQKD) lie on the Cytoplasmic side of the membrane. The chain crosses the membrane as a helical span at residues 1296-1316 (MVIIHTGLTIFLSAATAMAVW). Residues 1317–1361 (SMIKGQRDQKGLSWATPLAGLLGGEGVGLRLLAFRKLAERRNRRS) are Lumenal-facing. Residues 1362–1379 (FSEPLTVVGVMLTVASGM) form a helical membrane-spanning segment. Residues 1380–1384 (VRHTS) lie on the Cytoplasmic side of the membrane. The chain crosses the membrane as a helical span at residues 1385-1405 (QEALCALVAGAFLLLMMVLGT). Over 1406-1456 (RKMQLTAEWCGEVEWNPDLVNEGGEVNLKVRQDAMGNLHLTEVEKEERAMA) the chain is Lumenal. The segment at 1412–1451 (AEWCGEVEWNPDLVNEGGEVNLKVRQDAMGNLHLTEVEKE) is interacts with and activates NS3 protease. Residues 1457–1477 (LWLLAGLVASAFHWAGILIVL) constitute an intramembrane region (helical). The Lumenal segment spans residues 1478–2162 (AVWTLFEMLG…RMAERDAPEA (685 aa)). The 180-residue stretch at 1492–1671 (SELVFSGQET…EAEKSRPEIP (180 aa)) folds into the Peptidase S7 domain. Active-site charge relay system; for serine protease NS3 activity residues include His1545, Asp1569, and Ser1629. The region spanning 1677–1833 (TGWMSKGQIT…ESNGAIMSEE (157 aa)) is the Helicase ATP-binding domain. 1690–1697 (MHPGSGKT) is a binding site for ATP. Residues 1781-1784 (DEAH) carry the DEAH box motif. Positions 1844-2002 (GFDWITEYEG…TLRGPVATFY (159 aa)) constitute a Helicase C-terminal domain. Lys1885 is subject to N6-acetyllysine; by host. The chain crosses the membrane as a helical span at residues 2163 to 2183 (FLTIVEVAVLGVATLGILWCF). Residues 2184–2191 (VARASVSR) lie on the Cytoplasmic side of the membrane. Residues 2192–2211 (MFLGTVVLFAALFLLWIGGV) constitute an intramembrane region (helical). A topological domain (lumenal) is located at residue Asp2212. A helical transmembrane segment spans residues 2213 to 2233 (YGHMAGIALIFYTLLTVLQPE). The Cytoplasmic portion of the chain corresponds to 2234 to 2246 (PGKQRSSDDNRLA). Residues 2247 to 2267 (YFLLGLFSLAGLVTANEMGML) form a helical membrane-spanning segment. The Lumenal segment spans residues 2268–2301 (DKTKADLAGLVWRGEQRHPAWEEWTNVDIQPARS). Residues 2302-2322 (WGTYVLIVSLFTPYMLHQLQT) constitute an intramembrane region (helical). The Lumenal portion of the chain corresponds to 2323–2345 (KIQQLVNSSVASGAQAMRDLGGG). Residues 2346–2366 (TPFFGVAGHVIALGVTSLVGA) constitute an intramembrane region (helical). Over 2367 to 2368 (TP) the chain is Lumenal. Residues 2369–2389 (MSLGLGVALAAFHLAIVASGL) form a helical membrane-spanning segment. The Cytoplasmic segment spans residues 2390 to 2432 (EAELTQRAHRVFFSAMVKNPMVDGDVINPFPDGETKPALYERR). A helical transmembrane segment spans residues 2433–2453 (MSLILAIALCMGSVVLNRTAA). The Lumenal portion of the chain corresponds to 2454 to 2476 (SMTEAGAVGLAALGQLVHPETET). The chain crosses the membrane as a helical span at residues 2477–2497 (LWTMPMACGMAGLVRGSFWGL). The Cytoplasmic segment spans residues 2498-3416 (LPMGHRLWLR…WDLKLESNII (919 aa)). The mRNA cap 0-1 NS5-type MT domain maps to 2514–2778 (GGAEGETLGD…EVDLGTGTRC (265 aa)). Ser2569 is a binding site for S-adenosyl-L-methionine. Ser2569 carries the post-translational modification Phosphoserine. Lys2574 acts as the For 2'-O-MTase activity in catalysis. Residues Gly2599, Trp2600, Thr2617, Ile2618, Asp2644, and Val2645 each contribute to the S-adenosyl-L-methionine site. The active-site For 2'-O-MTase activity is Asp2659. Ile2660 contacts S-adenosyl-L-methionine. Catalysis depends on for 2'-O-MTase activity residues Lys2696 and Glu2732. The interaction with host SCRIB stretch occupies residues 2732–2736 (EMYFS). Tyr2734 serves as a coordination point for S-adenosyl-L-methionine. The Zn(2+) site is built by Glu2952, His2956, Cys2961, and Cys2964. The RdRp catalytic domain maps to 3042 to 3191 (GLFYADDTAG…RPIDDRFGKA (150 aa)). Residues His3226, Cys3242, and Cys3361 each coordinate Zn(2+).

This sequence in the N-terminal section; belongs to the class I-like SAM-binding methyltransferase superfamily. mRNA cap 0-1 NS5-type methyltransferase family. As to quaternary structure, homodimer. Interacts (via N-terminus) with host EXOC1 (via C-terminus); this interaction results in EXOC1 degradation through the proteasome degradation pathway. In terms of assembly, forms heterodimers with envelope protein E in the endoplasmic reticulum and Golgi. Homodimer; in the endoplasmic reticulum and Golgi. Interacts with protein prM. Interacts with non-structural protein 1. As to quaternary structure, homodimer; Homohexamer when secreted. Interacts with envelope protein E. NS1 interacts with NS4B. Interacts with host complement protein CFH; this interaction leads to the degradation of C3. In terms of assembly, interacts (via N-terminus) with serine protease NS3. Forms a heterodimer with serine protease NS3. May form homooligomers. As to quaternary structure, forms a heterodimer with NS2B. Interacts with non-structural protein 2A (via N-terminus). Interacts with NS4B. Interacts with unphosphorylated RNA-directed RNA polymerase NS5; this interaction stimulates RNA-directed RNA polymerase NS5 guanylyltransferase activity. In terms of assembly, interacts with serine protease NS3. Homodimer. Interacts with host STAT2; this interaction inhibits the phosphorylation of the latter, and, when all viral proteins are present (polyprotein), targets STAT2 for degradation. Interacts with serine protease NS3. In terms of processing, specific enzymatic cleavages in vivo yield mature proteins. Cleavages in the lumen of endoplasmic reticulum are performed by host signal peptidase, whereas cleavages in the cytoplasmic side are performed by serine protease NS3. Signal cleavage at the 2K-4B site requires a prior NS3 protease-mediated cleavage at the 4A-2K site. Cleaved in post-Golgi vesicles by a host furin, releasing the mature small envelope protein M, and peptide pr. This cleavage is incomplete as up to 30% of viral particles still carry uncleaved prM. Post-translationally, N-glycosylated. In terms of processing, N-glycosylated. The excreted form is glycosylated and this is required for efficient secretion of the protein from infected cells. Acetylated by host KAT5. Acetylation modulates NS3 RNA-binding and unwinding activities and plays an important positive role for viral replication. Post-translationally, phosphorylated on serines residues. This phosphorylation may trigger NS5 nuclear localization.

Its subcellular location is the virion. It is found in the host nucleus. The protein localises to the host cytoplasm. It localises to the host perinuclear region. The protein resides in the secreted. Its subcellular location is the virion membrane. It is found in the host endoplasmic reticulum membrane. It carries out the reaction Selective hydrolysis of -Xaa-Xaa-|-Yaa- bonds in which each of the Xaa can be either Arg or Lys and Yaa can be either Ser or Ala.. The catalysed reaction is RNA(n) + a ribonucleoside 5'-triphosphate = RNA(n+1) + diphosphate. The enzyme catalyses a ribonucleoside 5'-triphosphate + H2O = a ribonucleoside 5'-diphosphate + phosphate + H(+). It catalyses the reaction ATP + H2O = ADP + phosphate + H(+). It carries out the reaction a 5'-end (5'-triphosphoguanosine)-ribonucleoside in mRNA + S-adenosyl-L-methionine = a 5'-end (N(7)-methyl 5'-triphosphoguanosine)-ribonucleoside in mRNA + S-adenosyl-L-homocysteine. The catalysed reaction is a 5'-end (N(7)-methyl 5'-triphosphoguanosine)-ribonucleoside in mRNA + S-adenosyl-L-methionine = a 5'-end (N(7)-methyl 5'-triphosphoguanosine)-(2'-O-methyl-ribonucleoside) in mRNA + S-adenosyl-L-homocysteine + H(+). Its function is as follows. Plays a role in virus budding by binding to the cell membrane and gathering the viral RNA into a nucleocapsid that forms the core of a mature virus particle. During virus entry, may induce genome penetration into the host cytoplasm after hemifusion induced by the surface proteins. Can migrate to the cell nucleus where it modulates host functions. Inhibits RNA silencing by interfering with host Dicer. In terms of biological role, prevents premature fusion activity of envelope proteins in trans-Golgi by binding to envelope protein E at pH6.0. After virion release in extracellular space, gets dissociated from E dimers. Functionally, acts as a chaperone for envelope protein E during intracellular virion assembly by masking and inactivating envelope protein E fusion peptide. prM is the only viral peptide matured by host furin in the trans-Golgi network probably to avoid catastrophic activation of the viral fusion activity in acidic Golgi compartment prior to virion release. prM-E cleavage is inefficient, and many virions are only partially matured. These uncleaved prM would play a role in immune evasion. Its function is as follows. May play a role in virus budding. Exerts cytotoxic effects by activating a mitochondrial apoptotic pathway through M ectodomain. May display a viroporin activity. Binds to host cell surface receptor and mediates fusion between viral and cellular membranes. Envelope protein is synthesized in the endoplasmic reticulum in the form of heterodimer with protein prM. They play a role in virion budding in the ER, and the newly formed immature particle is covered with 60 spikes composed of heterodimer between precursor prM and envelope protein E. The virion is transported to the Golgi apparatus where the low pH causes dissociation of PrM-E heterodimers and formation of E homodimers. prM-E cleavage is inefficient, and many virions are only partially matured. These uncleaved prM would play a role in immune evasion. In terms of biological role, involved in immune evasion, pathogenesis and viral replication. Once cleaved off the polyprotein, is targeted to three destinations: the viral replication cycle, the plasma membrane and the extracellular compartment. Essential for viral replication. Required for formation of the replication complex and recruitment of other non-structural proteins to the ER-derived membrane structures. Excreted as a hexameric lipoparticle that plays a role against host immune response. Antagonizing the complement function. Binds to the host macrophages and dendritic cells. Inhibits signal transduction originating from Toll-like receptor 3 (TLR3). Functionally, component of the viral RNA replication complex that functions in virion assembly and antagonizes the host immune response. Its function is as follows. Required cofactor for the serine protease function of NS3. May have membrane-destabilizing activity and form viroporins. Displays three enzymatic activities: serine protease, NTPase and RNA helicase. NS3 serine protease, in association with NS2B, performs its autocleavage and cleaves the polyprotein at dibasic sites in the cytoplasm: C-prM, NS2A-NS2B, NS2B-NS3, NS3-NS4A, NS4A-2K and NS4B-NS5. NS3 RNA helicase binds RNA and unwinds dsRNA in the 3' to 5' direction. In terms of biological role, regulates the ATPase activity of the NS3 helicase activity. NS4A allows NS3 helicase to conserve energy during unwinding. Functionally, functions as a signal peptide for NS4B and is required for the interferon antagonism activity of the latter. Its function is as follows. Induces the formation of ER-derived membrane vesicles where the viral replication takes place. Inhibits interferon (IFN)-induced host STAT1 phosphorylation and nuclear translocation, thereby preventing the establishment of cellular antiviral state by blocking the IFN-alpha/beta pathway. Inhibits STAT2 translocation in the nucleus after IFN-alpha treatment. Replicates the viral (+) and (-) RNA genome, and performs the capping of genomes in the cytoplasm. NS5 methylates viral RNA cap at guanine N-7 and ribose 2'-O positions. Besides its role in RNA genome replication, also prevents the establishment of cellular antiviral state by blocking the interferon-alpha/beta (IFN-alpha/beta) signaling pathway. Inhibits host TYK2 and STAT2 phosphorylation, thereby preventing activation of JAK-STAT signaling pathway. In Homo sapiens (Human), this protein is Genome polyprotein.